A 238-amino-acid polypeptide reads, in one-letter code: Gem-associated protein 8 (238 aa).

Residues 66–127 form a disordered region; the sequence is AGHPWDSQGQ…LESDSDDEVE (62 aa). Polar residues-rich tracts occupy residues 72–82 and 96–108; these read SQGQHMAQQES and LRNSSRTQASTRG. Residues 113–127 are compositionally biased toward acidic residues; it reads CEEEELESDSDDEVE. A Phosphoserine modification is found at S122. A coiled-coil region spans residues 131–164; sequence SNMEITEELRQYFAQTERHREERRRQQQLDAERL.

Part of the core SMN complex that contains SMN1, GEMIN2/SIP1, DDX20/GEMIN3, GEMIN4, GEMIN5, GEMIN6, GEMIN7, GEMIN8 and STRAP/UNRIP. Part of the SMN-Sm complex that contains SMN1, GEMIN2/SIP1, DDX20/GEMIN3, GEMIN4, GEMIN5, GEMIN6, GEMIN7, GEMIN8, STRAP/UNRIP and the Sm proteins SNRPB, SNRPD1, SNRPD2, SNRPD3, SNRPE, SNRPF and SNRPG. Interacts with GEMIN6; the interaction is direct. Interacts with GEMIN7; the interaction is direct. Interacts with SMN1; the interaction is direct. Interacts with GEMIN4; the interaction is direct. As to expression, widely expressed in embryonic tissues (at protein level).

The protein localises to the nucleus. It is found in the gem. Its subcellular location is the cytoplasm. The SMN complex catalyzes the assembly of small nuclear ribonucleoproteins (snRNPs), the building blocks of the spliceosome, and thereby plays an important role in the splicing of cellular pre-mRNAs. Most spliceosomal snRNPs contain a common set of Sm proteins SNRPB, SNRPD1, SNRPD2, SNRPD3, SNRPE, SNRPF and SNRPG that assemble in a heptameric protein ring on the Sm site of the small nuclear RNA to form the core snRNP (Sm core). In the cytosol, the Sm proteins SNRPD1, SNRPD2, SNRPE, SNRPF and SNRPG are trapped in an inactive 6S pICln-Sm complex by the chaperone CLNS1A that controls the assembly of the core snRNP. To assemble core snRNPs, the SMN complex accepts the trapped 5Sm proteins from CLNS1A forming an intermediate. Binding of snRNA inside 5Sm triggers eviction of the SMN complex, thereby allowing binding of SNRPD3 and SNRPB to complete assembly of the core snRNP. This Mus musculus (Mouse) protein is Gem-associated protein 8 (Gemin8).